Reading from the N-terminus, the 1283-residue chain is Peroxisomal ATPase PEX1 (1283 aa).

The interval 346–367 is disordered; it reads SKTKQNVLSPEKEKQMSEPLDQ. Phosphoserine is present on serine 354. Residues 355-367 are compositionally biased toward basic and acidic residues; that stretch reads PEKEKQMSEPLDQ. ATP is bound by residues 599 to 606 and 881 to 888; these read GGKGSGKS and GPPGTGKT. Serine 1181, serine 1209, and serine 1211 each carry phosphoserine. The segment at 1260-1283 is disordered; sequence FQNPKRRKNQSGTMFRPGQKVTLA.

Belongs to the AAA ATPase family. Homooligomer; homooligomerizes in the cytosol, interaction with PEX6 promotes dissociation of the homooligomer. Interacts with PEX6; forming the PEX1-PEX6 AAA ATPase complex, which is composed of a heterohexamer formed by a trimer of PEX1-PEX6 dimers. Interacts indirectly with PEX26, via its interaction with PEX6.

Its subcellular location is the cytoplasm. The protein resides in the cytosol. It localises to the peroxisome membrane. It catalyses the reaction ATP + H2O = ADP + phosphate + H(+). In terms of biological role, component of the PEX1-PEX6 AAA ATPase complex, a protein dislocase complex that mediates the ATP-dependent extraction of the PEX5 receptor from peroxisomal membranes, an essential step for PEX5 recycling. Specifically recognizes PEX5 monoubiquitinated at 'Cys-11', and pulls it out of the peroxisome lumen through the PEX2-PEX10-PEX12 retrotranslocation channel. Extraction by the PEX1-PEX6 AAA ATPase complex is accompanied by unfolding of the TPR repeats and release of bound cargo from PEX5. The sequence is that of Peroxisomal ATPase PEX1 from Homo sapiens (Human).